The primary structure comprises 71 residues: Small ribosomal subunit protein bS21 (71 aa).

The protein belongs to the bacterial ribosomal protein bS21 family.

This Chromohalobacter salexigens (strain ATCC BAA-138 / DSM 3043 / CIP 106854 / NCIMB 13768 / 1H11) protein is Small ribosomal subunit protein bS21.